Consider the following 249-residue polypeptide: 5'-nucleotidase SurE (249 aa).

Positions 8, 9, 39, and 91 each coordinate a divalent metal cation.

Belongs to the SurE nucleotidase family. Requires a divalent metal cation as cofactor.

It is found in the cytoplasm. The catalysed reaction is a ribonucleoside 5'-phosphate + H2O = a ribonucleoside + phosphate. In terms of biological role, nucleotidase that shows phosphatase activity on nucleoside 5'-monophosphates. The sequence is that of 5'-nucleotidase SurE from Pseudomonas fluorescens (strain SBW25).